The primary structure comprises 376 residues: T-box transcription factor 18 (376 aa).

Over residues 38–63 the composition is skewed to low complexity; that stretch reads STSRPSSSSPPSLPAVSSELLSSSFP. Residues 38 to 76 are disordered; it reads STSRPSSSSPPSLPAVSSELLSSSFPTNAPESSSRDLAP. A DNA-binding region (T-box) is located at residues 171–364; that stretch reads LANQEQWAKF…GNKYCRTDRK (194 aa).

Its subcellular location is the nucleus. Functionally, transcriptional regulator involved in developmental processes. Directly binds to the promoter region of the sex-determining factor xol-1 to activate its transcription. Its activation of xol-1 transcription controls sex determination and X chromosome dosage compensation to promote male development. Has a role in the fox-1-sex-1-mediated determination of sexual fate. The chain is T-box transcription factor 18 from Caenorhabditis elegans.